Reading from the N-terminus, the 200-residue chain is MTTELRRKLVIVGDGACGKTCLLIVFSKGTFPEVYVPTVFENYVADVEVDGRHIELALWDTAGQEDYDRLRPLSYPDSHVVLICFSVDAPESLDNVQEKWISEVLHFCSNLPILLVGCKVDLRNDPKTIEELSKTSQKPITFEEGQVVAQKIGAYKYLECSAKLNEGVNEVFETAARASMLKFKPASVPKTKKKKHCILL.

13–20 contributes to the GTP binding site; it reads GDGACGKT. The short motif at 35 to 43 is the Effector region element; it reads YVPTVFENY. GTP contacts are provided by residues 60 to 64 and 118 to 121; these read DTAGQ and CKVD. Cysteine 197 is modified (cysteine methyl ester). Residue cysteine 197 is the site of S-geranylgeranyl cysteine attachment. Residues 198–200 constitute a propeptide, removed in mature form; that stretch reads ILL.

It belongs to the small GTPase superfamily. Rho family.

The protein localises to the cell membrane. The sequence is that of GTP-binding protein rho5 (rho5) from Schizosaccharomyces pombe (strain 972 / ATCC 24843) (Fission yeast).